The sequence spans 376 residues: Succinyl-diaminopimelate desuccinylase (376 aa).

Residue histidine 74 coordinates Zn(2+). The active site involves aspartate 76. Aspartate 105 is a Zn(2+) binding site. Residue glutamate 135 is the Proton acceptor of the active site. Zn(2+) contacts are provided by glutamate 136, glutamate 164, and histidine 349.

The protein belongs to the peptidase M20A family. DapE subfamily. In terms of assembly, homodimer. Requires Zn(2+) as cofactor. It depends on Co(2+) as a cofactor.

It carries out the reaction N-succinyl-(2S,6S)-2,6-diaminopimelate + H2O = (2S,6S)-2,6-diaminopimelate + succinate. The protein operates within amino-acid biosynthesis; L-lysine biosynthesis via DAP pathway; LL-2,6-diaminopimelate from (S)-tetrahydrodipicolinate (succinylase route): step 3/3. In terms of biological role, catalyzes the hydrolysis of N-succinyl-L,L-diaminopimelic acid (SDAP), forming succinate and LL-2,6-diaminopimelate (DAP), an intermediate involved in the bacterial biosynthesis of lysine and meso-diaminopimelic acid, an essential component of bacterial cell walls. In Zymomonas mobilis subsp. mobilis (strain ATCC 31821 / ZM4 / CP4), this protein is Succinyl-diaminopimelate desuccinylase.